A 225-amino-acid chain; its full sequence is Uracil-DNA glycosylase (225 aa).

Asp65 (proton acceptor) is an active-site residue.

This sequence belongs to the uracil-DNA glycosylase (UDG) superfamily. UNG family.

The protein resides in the cytoplasm. It carries out the reaction Hydrolyzes single-stranded DNA or mismatched double-stranded DNA and polynucleotides, releasing free uracil.. Excises uracil residues from the DNA which can arise as a result of misincorporation of dUMP residues by DNA polymerase or due to deamination of cytosine. This chain is Uracil-DNA glycosylase, found in Lysinibacillus sphaericus (strain C3-41).